We begin with the raw amino-acid sequence, 425 residues long: Bifunctional phosphoribosylaminoimidazole carboxylase/phosphoribosylaminoimidazole succinocarboxamide synthetase (425 aa).

Ala-2 carries the N-acetylalanine modification. Positions 2-260 (ATAEVLNIGK…WVAERVELLL (259 aa)) are SAICAR synthetase domain. A Phosphotyrosine modification is found at Tyr-22. Ser-27 bears the Phosphoserine mark. An N6-acetyllysine modification is found at Lys-36. Ser-107 is modified (phosphoserine). A Phosphothreonine modification is found at Thr-238. The residue at position 247 (Lys-247) is an N6-acetyllysine. A linker region spans residues 261-266 (KSESQC). The interval 267 to 425 (RVVVLMGSTS…ADKKIRECNL (159 aa)) is AIR carboxylase domain. Ser-274 bears the Phosphoserine mark. Position 332 (Ser-332) interacts with CO2.

The protein in the N-terminal section; belongs to the SAICAR synthetase family. It in the C-terminal section; belongs to the AIR carboxylase family. Class II subfamily. Homooctamer.

The enzyme catalyses 5-amino-1-(5-phospho-D-ribosyl)imidazole-4-carboxylate + L-aspartate + ATP = (2S)-2-[5-amino-1-(5-phospho-beta-D-ribosyl)imidazole-4-carboxamido]succinate + ADP + phosphate + 2 H(+). The catalysed reaction is 5-amino-1-(5-phospho-D-ribosyl)imidazole-4-carboxylate + H(+) = 5-amino-1-(5-phospho-beta-D-ribosyl)imidazole + CO2. It functions in the pathway purine metabolism; IMP biosynthesis via de novo pathway; 5-amino-1-(5-phospho-D-ribosyl)imidazole-4-carboxamide from 5-amino-1-(5-phospho-D-ribosyl)imidazole-4-carboxylate: step 1/2. The protein operates within purine metabolism; IMP biosynthesis via de novo pathway; 5-amino-1-(5-phospho-D-ribosyl)imidazole-4-carboxylate from 5-amino-1-(5-phospho-D-ribosyl)imidazole (carboxylase route): step 1/1. Functionally, bifunctional phosphoribosylaminoimidazole carboxylase and phosphoribosylaminoimidazole succinocarboxamide synthetase catalyzing two reactions of the de novo purine biosynthetic pathway. The sequence is that of Bifunctional phosphoribosylaminoimidazole carboxylase/phosphoribosylaminoimidazole succinocarboxamide synthetase from Homo sapiens (Human).